Reading from the N-terminus, the 240-residue chain is 2,3-bisphosphoglycerate-dependent phosphoglycerate mutase (240 aa).

Residues 5–12 (RHGESVWN), 18–19 (TG), Arg-57, 84–87 (ERHY), Lys-95, 111–112 (RR), and 180–181 (GN) contribute to the substrate site. His-6 serves as the catalytic Tele-phosphohistidine intermediate. Glu-84 serves as the catalytic Proton donor/acceptor.

This sequence belongs to the phosphoglycerate mutase family. BPG-dependent PGAM subfamily. In terms of assembly, homodimer.

The catalysed reaction is (2R)-2-phosphoglycerate = (2R)-3-phosphoglycerate. It participates in carbohydrate degradation; glycolysis; pyruvate from D-glyceraldehyde 3-phosphate: step 3/5. Functionally, catalyzes the interconversion of 2-phosphoglycerate and 3-phosphoglycerate. This Nitrosococcus oceani (strain ATCC 19707 / BCRC 17464 / JCM 30415 / NCIMB 11848 / C-107) protein is 2,3-bisphosphoglycerate-dependent phosphoglycerate mutase.